The following is a 159-amino-acid chain: uncharacterized protein (159 aa).

The next 3 helical transmembrane spans lie at 76 to 96 (AIKY…FIGK), 104 to 124 (IVML…FSPT), and 131 to 151 (FGAG…VIGG).

The protein resides in the membrane. This is an uncharacterized protein from Acanthamoeba polyphaga (Amoeba).